We begin with the raw amino-acid sequence, 144 residues long: Maximins 7/H13 (144 aa).

The first 18 residues, 1–18 (MNFKYIVAVSFLIASAYA), serve as a signal peptide directing secretion. A propeptide spanning residues 19–43 (RSEENDEQSLSQRDVLEEESLREIR) is cleaved from the precursor. Asn-70 carries the post-translational modification Asparagine amide. Positions 74–123 (TAEDHEVMKRLEAVMRDLDSLDYPEEAAERETRGFNQEEIANLFTKKEKR) are excised as a propeptide. A Leucine amide modification is found at Leu-143.

It belongs to the bombinin family. Expressed by the skin glands.

The protein localises to the secreted. In terms of biological role, maximin-7 shows antimicrobial activity against bacteria and against the fungus C.albicans. It has little hemolytic activity. Functionally, maximin-H13 shows antimicrobial activity against bacteria and against the fungus C.albicans. Shows strong hemolytic activity. The protein is Maximins 7/H13 of Bombina maxima (Giant fire-bellied toad).